A 169-amino-acid polypeptide reads, in one-letter code: Short form salivary protein D7R3 (169 aa).

The signal sequence occupies residues 1 to 21; the sequence is MFGKLLPCAILVWCLFSLGQA. 3 cysteine pairs are disulfide-bonded: Cys-30-Cys-62, Cys-43-Cys-168, and Cys-101-Cys-120. Glu-31 and Arg-46 together coordinate noradrenaline. Glu-31 serves as a coordination point for serotonin. 4 residues coordinate serotonin: His-59, Tyr-118, Asp-135, and Glu-138. Positions 118, 135, and 138 each coordinate histamine. Noradrenaline contacts are provided by Asp-135 and Glu-138.

Belongs to the PBP/GOBP family. As to expression, female saliva (at protein level). Female salivary gland. Low-level expression in female carcass without salivary glands. Not detected in male tissues.

The protein localises to the secreted. In terms of biological role, modulates blood feeding of female mosquitoes on vertebrate species by binding and sequestering different mediators involved in the host response. Binds serotonin, noradrenaline, histamine and adrenaline. Inhibits histamine-, serotonin- and noradrenaline-induced smooth muscle contraction. Exhibits vasodilating activity. The sequence is that of Short form salivary protein D7R3 from Anopheles gambiae (African malaria mosquito).